Reading from the N-terminus, the 70-residue chain is UPF0270 protein VV1_1320 (70 aa).

It belongs to the UPF0270 family.

The polypeptide is UPF0270 protein VV1_1320 (Vibrio vulnificus (strain CMCP6)).